A 363-amino-acid chain; its full sequence is Peptide chain release factor 2 (363 aa).

Gln-251 is subject to N5-methylglutamine.

Belongs to the prokaryotic/mitochondrial release factor family. Post-translationally, methylated by PrmC. Methylation increases the termination efficiency of RF2.

It is found in the cytoplasm. Functionally, peptide chain release factor 2 directs the termination of translation in response to the peptide chain termination codons UGA and UAA. This Helicobacter pylori (strain P12) protein is Peptide chain release factor 2.